Here is a 215-residue protein sequence, read N- to C-terminus: Probable GTP-binding protein EngB (215 aa).

Residues 30 to 204 (EGLEVAFAGR…QMVLAQWLGL (175 aa)) form the EngB-type G domain. GTP is bound by residues 38–45 (GRSNAGKS), 64–68 (GRTQL), 82–85 (DLPG), 149–152 (TKAD), and 182–185 (LFSA). Residues S45 and T66 each contribute to the Mg(2+) site.

Belongs to the TRAFAC class TrmE-Era-EngA-EngB-Septin-like GTPase superfamily. EngB GTPase family. The cofactor is Mg(2+).

Functionally, necessary for normal cell division and for the maintenance of normal septation. This Pseudomonas paraeruginosa (strain DSM 24068 / PA7) (Pseudomonas aeruginosa (strain PA7)) protein is Probable GTP-binding protein EngB.